The chain runs to 120 residues: MPDSRKARRIADPGLQPERTSLAWFRTMLGYGALMALAIKHNWHQAGMLFWISIGILAIVALILWHYTRNRNLMDVTNSDFSQFHVVRDKFLISLAVLSLAILFAVTHIHQLIVFIERVA.

Topologically, residues 1-21 are cytoplasmic; that stretch reads MPDSRKARRIADPGLQPERTS. A helical membrane pass occupies residues 22-39; sequence LAWFRTMLGYGALMALAI. The Periplasmic segment spans residues 40–48; sequence KHNWHQAGM. Residues 49–68 traverse the membrane as a helical segment; that stretch reads LFWISIGILAIVALILWHYT. The Cytoplasmic portion of the chain corresponds to 69–90; sequence RNRNLMDVTNSDFSQFHVVRDK. A helical membrane pass occupies residues 91-113; sequence FLISLAVLSLAILFAVTHIHQLI. Residues 114–120 are Periplasmic-facing; sequence VFIERVA.

The protein resides in the cell inner membrane. In Escherichia coli O157:H7, this protein is Inner membrane protein YidG (yidG).